The chain runs to 69 residues: U2-agatoxin-Ao1c (69 aa).

A signal peptide spans Met-1–Ala-20. Residues Val-21 to Arg-34 constitute a propeptide that is removed on maturation. Disulfide bonds link Cys-36–Cys-52, Cys-43–Cys-57, and Cys-51–Cys-67. The residue at position 68 (Leu-68) is a Leucine amide.

The protein belongs to the neurotoxin 01 (U2-agtx) family. Expressed by the venom gland.

Its subcellular location is the secreted. Its function is as follows. Insect active toxin causing rapid but reversible paralysis in crickets. No activity shown in mammals. Does not show effect on mammalian voltage-gated calcium channels. The chain is U2-agatoxin-Ao1c from Agelena orientalis (Funnel-web spider).